A 225-amino-acid polypeptide reads, in one-letter code: UPF0758 protein BCE_4545 (225 aa).

The MPN domain maps to 103–225 (SIRSPEDCAT…FVSLKEKGHI (123 aa)). 3 residues coordinate Zn(2+): His174, His176, and Asp187. The JAMM motif motif lies at 174–187 (HNHPSGDPAPSRED).

Belongs to the UPF0758 family.

This chain is UPF0758 protein BCE_4545, found in Bacillus cereus (strain ATCC 10987 / NRS 248).